Consider the following 447-residue polypeptide: Aladin (447 aa).

Positions 49 to 69 (STPSSLQENEGQENGDKASGE) are disordered. WD repeat units lie at residues 97 to 138 (LSEI…EPCI), 142 to 181 (DSQRNVKALEWRPNGGKSLSIACRGGICIWAASYPGNMAL), 210 to 250 (QNDE…GTPI), and 252 to 291 (RGLGGISMLKWSPTGDYFFAARFDGTFCLWETNTWTSEPW).

As to quaternary structure, part of the nuclear pore complex (NPC). The NPC has an eight-fold symmetrical structure comprising a central transport channel and two rings, the cytoplasmic and nuclear rings, to which eight filaments are attached. The cytoplasmic filaments have loose ends, while the nuclear filaments are joined in a distal ring, forming a nuclear basket. NPCs are highly dynamic in configuration and composition, and can be devided in 3 subcomplexes, the NUP62 subcomplex, the NUP107-160 subcomplex and the NUP93 subcomplex, containing approximately 30 different nucleoporin proteins.

It localises to the nucleus envelope. The protein resides in the nucleus. It is found in the nuclear pore complex. This is Aladin from Arabidopsis thaliana (Mouse-ear cress).